Reading from the N-terminus, the 88-residue chain is Stannin (88 aa).

The Mitochondrial intermembrane segment spans residues 1 to 10 (MSIMDHSPTT). The chain crosses the membrane as a helical span at residues 11-31 (GVVTVIVILIAIAALGALILG). The Cytoplasmic segment spans residues 32–88 (CWCYLRLQRISQSEDEESIVGDGETKEPFLLVQYSAKGPCVERKAKLMTANSPEVHG). A phosphoserine mark is found at serine 49 and serine 83.

The protein belongs to the stannin family. As to quaternary structure, monomer.

Its subcellular location is the mitochondrion outer membrane. Functionally, plays a role in the toxic effects of organotins. Plays a role in endosomal maturation. In Mus musculus (Mouse), this protein is Stannin (Snn).